The primary structure comprises 174 residues: Shikimate kinase 2 (174 aa).

12-17 contacts ATP; that stretch reads GAGKTT. 2 residues coordinate Mg(2+): threonine 16 and aspartate 32. Substrate-binding residues include aspartate 34, arginine 58, and glycine 79. The interval 112-126 is LID domain; it reads AEDPEEAQRPSLTGK. Arginine 120 contacts ATP. Arginine 139 contacts substrate. Position 155 (glutamine 155) interacts with ATP.

The protein belongs to the shikimate kinase family. AroL subfamily. In terms of assembly, monomer. It depends on Mg(2+) as a cofactor.

Its subcellular location is the cytoplasm. The catalysed reaction is shikimate + ATP = 3-phosphoshikimate + ADP + H(+). It participates in metabolic intermediate biosynthesis; chorismate biosynthesis; chorismate from D-erythrose 4-phosphate and phosphoenolpyruvate: step 5/7. Its function is as follows. Catalyzes the specific phosphorylation of the 3-hydroxyl group of shikimic acid using ATP as a cosubstrate. The protein is Shikimate kinase 2 of Yersinia pseudotuberculosis serotype IB (strain PB1/+).